The chain runs to 498 residues: POTE ankyrin domain family member A (498 aa).

5 ANK repeats span residues K98–V127, K131–L160, Y164–S193, G197–A226, and F230–S259. The disordered stretch occupies residues N289–Q410. Polar residues predominate over residues Q290–E302. A compositionally biased stretch (basic and acidic residues) spans Q303–D338. Residues H348–L359 are compositionally biased toward polar residues. Over residues E392–K406 the composition is skewed to basic and acidic residues. Positions E469–Q497 form a coiled coil.

The protein belongs to the POTE family.

The sequence is that of POTE ankyrin domain family member A (POTEA) from Homo sapiens (Human).